A 184-amino-acid chain; its full sequence is Antigen Sm21.7 (184 aa).

One can recognise an EF-hand domain in the interval 37 to 72 (LDMKQVNEWIALFDVDKDQKITFEEFCRGLGLKQNE). Ca(2+)-binding residues include D50, D52, D54, K56, and E61.

This Schistosoma mansoni (Blood fluke) protein is Antigen Sm21.7 (SM21.7).